The following is a 497-amino-acid chain: Protein nucleotidyltransferase YdiU (497 aa).

8 residues coordinate ATP: Gly-88, Gly-90, Arg-91, Lys-110, Asp-122, Gly-123, Arg-173, and Arg-180. Asp-249 serves as the catalytic Proton acceptor. Mg(2+) is bound by residues Asn-250 and Asp-259. Residue Asp-259 coordinates ATP. Residues 477-497 (FARYAEPPEGGGRGYRTFCGT) form a disordered region.

The protein belongs to the SELO family. Requires Mg(2+) as cofactor. Mn(2+) is required as a cofactor.

It carries out the reaction L-seryl-[protein] + ATP = 3-O-(5'-adenylyl)-L-seryl-[protein] + diphosphate. It catalyses the reaction L-threonyl-[protein] + ATP = 3-O-(5'-adenylyl)-L-threonyl-[protein] + diphosphate. The catalysed reaction is L-tyrosyl-[protein] + ATP = O-(5'-adenylyl)-L-tyrosyl-[protein] + diphosphate. The enzyme catalyses L-histidyl-[protein] + UTP = N(tele)-(5'-uridylyl)-L-histidyl-[protein] + diphosphate. It carries out the reaction L-seryl-[protein] + UTP = O-(5'-uridylyl)-L-seryl-[protein] + diphosphate. It catalyses the reaction L-tyrosyl-[protein] + UTP = O-(5'-uridylyl)-L-tyrosyl-[protein] + diphosphate. Nucleotidyltransferase involved in the post-translational modification of proteins. It can catalyze the addition of adenosine monophosphate (AMP) or uridine monophosphate (UMP) to a protein, resulting in modifications known as AMPylation and UMPylation. This is Protein nucleotidyltransferase YdiU from Methylorubrum extorquens (strain PA1) (Methylobacterium extorquens).